The following is a 602-amino-acid chain: Elongation factor 4 (602 aa).

The tr-type G domain maps to 7-189 (KHIRNFSIVA…AIVDKIPSPQ (183 aa)). GTP is bound by residues 19–24 (DHGKST) and 136–139 (NKID).

Belongs to the TRAFAC class translation factor GTPase superfamily. Classic translation factor GTPase family. LepA subfamily.

The protein localises to the cell membrane. It catalyses the reaction GTP + H2O = GDP + phosphate + H(+). Functionally, required for accurate and efficient protein synthesis under certain stress conditions. May act as a fidelity factor of the translation reaction, by catalyzing a one-codon backward translocation of tRNAs on improperly translocated ribosomes. Back-translocation proceeds from a post-translocation (POST) complex to a pre-translocation (PRE) complex, thus giving elongation factor G a second chance to translocate the tRNAs correctly. Binds to ribosomes in a GTP-dependent manner. The sequence is that of Elongation factor 4 from Clostridium kluyveri (strain ATCC 8527 / DSM 555 / NBRC 12016 / NCIMB 10680 / K1).